The chain runs to 1065 residues: NLR family CARD domain-containing protein 3 (1065 aa).

A compositionally biased stretch (basic and acidic residues) spans 1–10 (MRKQEVRTGR). The disordered stretch occupies residues 1 to 62 (MRKQEVRTGR…PLGPCSNDSR (62 aa)). The NACHT domain maps to 139–460 (RVSITIGVAG…YCFTHLSLQE (322 aa)). 145-152 (GVAGMGKT) contacts ATP. A TRAF6-binding motif is present at residues 457 to 460 (SLQE). 16 LRR repeats span residues 617–639 (EANLSLSLSQGVLQSLLPQLLYC), 641–663 (KLRLDTNQFQDPVMELLGSVLSG), 665–688 (DCRIQKISLAENQISNKGAKALAR), 693–716 (NRSLTSLDLRGNSIGPQGAKALAD), 721–744 (NRTLTSLSLQGNTVRDDGARSMAE), 749–772 (NRTLSMLHLQKNSIGPMGAQRMAD), 777–800 (NRSLKELMFSSNSIGDGGAKALAE), 805–828 (NQGLESLDLQSNSISDAGVAALMG), 833–856 (NQTLLSLSLRENSISPEGAQAIAH), 861–884 (NSTLKNLDLTANLLHDQGARAIAV), 889–912 (NRTLTSLHLQWNFIQAGAAQALGQ), 917–940 (NRSLTSLDLQENAIGDDGACAVAR), 945–968 (NTALTALYLQVASIGASGAQVLGE), 973–996 (NRTLEILDLRGNAIGVAGAKALAN), 1001–1029 (NSSLRRLNLQENSLGMDGAICIATALSGN), and 1031–1052 (RLQHINLQGNHIGDSGARMISE).

The protein belongs to the NLRP family. As to quaternary structure, directly interacts (via CARD) with TMEM173/STING; this interaction reduces TMEM173 trafficking to the perinuclear region in response to interferon stimulatory DNA. Also interacts, but to a lesser extent, with TBK1. Interacts with TRAF6; this interaction results in decreased TRAF6 'Lys-63'-linked polyubiquitination, but leaves 'Lys-48'-linked chains unchanged, promoting TRAF6 protein degradation. Interacts with PIK3R1/PIK3R2; this interaction disrupts the association between PIK3R1/PIK3R2 and the p110 catalytic subunit PIK3CA/PIK3CB/PIK3CD and reduces PIK3R1/PIK3R2 activation. Weakly interacts with PYCARD/ASC. Interacts with CASP1 and CASP5.

Its subcellular location is the cytoplasm. Negative regulator of the innate immune response. Attenuates signaling pathways activated by Toll-like receptors (TLRs) and the DNA sensor STING/TMEM173 in response to pathogen-associated molecular patterns, such as intracellular poly(dA:dT), but not poly(I:C), or in response to DNA virus infection, including that of Herpes simplex virus 1 (HSV1). May affect TLR4 signaling by acting at the level of TRAF6 ubiquitination, decreasing the activating 'Lys-63'-linked ubiquitination and leaving unchanged the degradative 'Lys-48'-linked ubiquitination. Inhibits the PI3K-AKT-mTOR pathway possibly by directly interacting with the posphatidylinositol 3-kinase regulatory subunit p85 (PIK3R1/PIK3R2) and disrupting the association between PIK3R1/PIK3R2 and the catalytic subunit p110 (PIK3CA/PIK3CB/PIK3CD) and reducing PIK3R1/PIK3R2 activation. Via its regulation of the PI3K-AKT-mTOR pathway, controls cell proliferation, predominantly in intestinal epithelial cells. May also affect NOD1- or NOD2-mediated NF-kappa-B activation. Might also affect the inflammatory response by preventing NLRP3 inflammasome formation, CASP1 cleavage and IL1B maturation. This Homo sapiens (Human) protein is NLR family CARD domain-containing protein 3 (NLRC3).